A 1976-amino-acid chain; its full sequence is Putative callose synthase 8 (1976 aa).

Residues 1 to 530 lie on the Cytoplasmic side of the membrane; sequence MSHEIVPVDP…FWQIFRSFDR (530 aa). The chain crosses the membrane as a helical span at residues 531–551; it reads MWSFFVLSLQALIIMACHDVG. Over 552–565 the chain is Extracellular; sequence SPLQVFNANIFEDV. A helical transmembrane segment spans residues 566–586; it reads MSIFITSAILKLIKGILDIIF. Residues 587–602 are Cytoplasmic-facing; that stretch reads KWKARNTMPINEKKKR. Residues 603–623 traverse the membrane as a helical segment; sequence LVKLGFAAMWTIILPVLYSHS. At 624–648 the chain is on the extracellular side; sequence RRKYICYFTNYKTWLGEWCFSPYMV. The helical transmembrane segment at 649–669 threads the bilayer; that stretch reads AVTIYLTGSAIELVLFFVPAI. At 670–707 the chain is on the cytoplasmic side; that stretch reads SKYIETSNHGIFKTLSWWGQPRLYVGRGMQETQVSQFK. The helical transmembrane segment at 708–728 threads the bilayer; it reads YTFFWILVLLTKFAFSYAFEI. Over 729–759 the chain is Extracellular; sequence KPLIEPTRLIMKVGVRNYEWHEIFPEVKSNA. The chain crosses the membrane as a helical span at residues 760 to 780; that stretch reads AAIVAVWAPIMVVYFMDTQIW. Residues 781-1544 are Cytoplasmic-facing; sequence YSVYCTIFGG…FDFFRMLSCY (764 aa). The chain crosses the membrane as a helical span at residues 1545–1565; the sequence is FTTIGFYFSSLISVIGIYIYL. Residues 1566-1595 are Extracellular-facing; that stretch reads YGQLYLVLSGLQKTLILEAKVKNIKSLETA. The helical transmembrane segment at 1596–1616 threads the bilayer; sequence LASQSFIQLGLLTGLPMVMEI. Topologically, residues 1617 to 1620 are cytoplasmic; it reads GLEK. Residues 1621-1641 form a helical membrane-spanning segment; it reads GFLIAFQDFILMQLQLAAFFF. The Extracellular segment spans residues 1642-1688; that stretch reads TFSLGTKTHYFGRTILHGGAKYRPTGRKVVVFHANFSENYRLYSRSH. A glycan (N-linked (GlcNAc...) asparagine) is linked at N1676. A helical membrane pass occupies residues 1689–1709; sequence FIKGFELMILLVVYELFKHTS. Residues 1710–1715 lie on the Cytoplasmic side of the membrane; that stretch reads QSNMAY. The chain crosses the membrane as a helical span at residues 1716–1736; the sequence is SFITFSVWFMSFTWLCAPFLF. Residues 1737 to 1790 lie on the Extracellular side of the membrane; sequence NPSGFTWEIIVGDWRDWNRWIKEQGGIGIQQDKSWQSWWNDEQAHLRGSGVGAR. Residues 1791-1811 form a helical membrane-spanning segment; the sequence is CLEIILSLRFFVYQYGLVYHL. The Cytoplasmic portion of the chain corresponds to 1812-1819; that stretch reads DITQSNTN. A helical transmembrane segment spans residues 1820–1840; the sequence is IIVYALSWVVILATFFTVKAV. The Extracellular segment spans residues 1841–1856; it reads DLGRQLFSTRKHLVFR. A helical transmembrane segment spans residues 1857-1877; sequence FFKVFVFVSILTIIITLANIC. Residues 1878–1884 lie on the Cytoplasmic side of the membrane; that stretch reads HLSVKDL. The chain crosses the membrane as a helical span at residues 1885 to 1905; sequence LVSCLAFLPTGWGLILIAQAV. Residues 1906 to 1928 lie on the Extracellular side of the membrane; that stretch reads RPKIEGTSLWEFTQVLARAYDYG. The helical transmembrane segment at 1929-1949 threads the bilayer; it reads MGVVLFAPMAILAWLPIISAF. The Cytoplasmic segment spans residues 1950–1976; the sequence is QTRFLFNEAFNRRLQIQPILAGKKKNR.

This sequence belongs to the glycosyltransferase 48 family.

The protein localises to the cell membrane. The catalysed reaction is [(1-&gt;3)-beta-D-glucosyl](n) + UDP-alpha-D-glucose = [(1-&gt;3)-beta-D-glucosyl](n+1) + UDP + H(+). Functionally, involved in callose synthesis at the forming cell plate during cytokinesis. During plant growth and development, callose is found as a transitory component of the cell plate in dividing cells, is a major component of pollen mother cell walls and pollen tubes, and is found as a structural component of plasmodesmatal canals. This Arabidopsis thaliana (Mouse-ear cress) protein is Putative callose synthase 8 (CALS8).